The primary structure comprises 579 residues: DNA ligase 1 (579 aa).

Glu244 provides a ligand contact to ATP. Catalysis depends on Lys246, which acts as the N6-AMP-lysine intermediate. ATP-binding residues include Arg251, Arg266, Glu296, Phe342, Arg419, and Lys425.

Belongs to the ATP-dependent DNA ligase family. Mg(2+) serves as cofactor.

The catalysed reaction is ATP + (deoxyribonucleotide)n-3'-hydroxyl + 5'-phospho-(deoxyribonucleotide)m = (deoxyribonucleotide)n+m + AMP + diphosphate.. In terms of biological role, DNA ligase that seals nicks in double-stranded DNA during DNA replication, DNA recombination and DNA repair. The chain is DNA ligase 1 from Methanosarcina mazei (strain ATCC BAA-159 / DSM 3647 / Goe1 / Go1 / JCM 11833 / OCM 88) (Methanosarcina frisia).